Reading from the N-terminus, the 307-residue chain is L-carnitine dehydrogenase (307 aa).

8-13 (GTGVIG) is a binding site for NAD(+).

It belongs to the 3-hydroxyacyl-CoA dehydrogenase family. L-carnitine dehydrogenase subfamily. Homodimer.

The protein resides in the cytoplasm. The catalysed reaction is carnitine + NAD(+) = 3-dehydrocarnitine + NADH + H(+). It participates in amine and polyamine metabolism; carnitine metabolism. Its function is as follows. Catalyzes the NAD(+)-dependent oxidation of L-carnitine to 3-dehydrocarnitine. The sequence is that of L-carnitine dehydrogenase from Oceanobacillus iheyensis (strain DSM 14371 / CIP 107618 / JCM 11309 / KCTC 3954 / HTE831).